We begin with the raw amino-acid sequence, 353 residues long: MEPSPDVPLEEITWHSPQHVQMMGGFLHSNNILFYFAESPFFDPTSNNASLALQAMHNENLRPFIETRGAFEGRLKTMQGLEFIVAHDPLLEAAAANAAAVARGEQPKEASNVWVIRKQMRRRSAAMGGQDDVQVLATYFVVGDSVFMAPSVWSVVGRRMLSTVTSLTKVLSTASALLTFSPSYGHSYLPHVPKSLEPTQLGQQSAQQSKETTPMPDMSGDKTTSRSALADASTTTLNASALQDARDFAETLNLLARYGNEYIDETPLAGEPGSFIFTKASASAAEQLSVAGAGAQASRQNIRSGATTPVPFGAGRPASVQPDSTKGKAADRPPAATKDKGKKRKSKIGSMSQ.

2 disordered regions span residues 193-231 (PKSL…ALAD) and 296-353 (QASR…SMSQ). Polar residues-rich tracts occupy residues 197–212 (EPTQ…SKET) and 297–307 (ASRQNIRSGAT).

Belongs to the Mediator complex subunit 6 family. Component of the Mediator complex.

It localises to the nucleus. In terms of biological role, component of the Mediator complex, a coactivator involved in the regulated transcription of nearly all RNA polymerase II-dependent genes. Mediator functions as a bridge to convey information from gene-specific regulatory proteins to the basal RNA polymerase II transcription machinery. Mediator is recruited to promoters by direct interactions with regulatory proteins and serves as a scaffold for the assembly of a functional preinitiation complex with RNA polymerase II and the general transcription factors. In Coccidioides immitis (strain RS) (Valley fever fungus), this protein is Mediator of RNA polymerase II transcription subunit 6 (MED6).